The chain runs to 317 residues: Pantothenate kinase (317 aa).

An ATP-binding site is contributed by 95 to 102 (GSVAVGKS).

This sequence belongs to the prokaryotic pantothenate kinase family.

The protein localises to the cytoplasm. It catalyses the reaction (R)-pantothenate + ATP = (R)-4'-phosphopantothenate + ADP + H(+). Its pathway is cofactor biosynthesis; coenzyme A biosynthesis; CoA from (R)-pantothenate: step 1/5. This chain is Pantothenate kinase, found in Myxococcus xanthus (strain DK1622).